A 334-amino-acid chain; its full sequence is Probable tRNA pseudouridine synthase B (334 aa).

Residue D82 is the Nucleophile of the active site. The PUA domain occupies 250–325 (LPKVWIRDSA…IAVDVDKVFM (76 aa)).

The protein belongs to the pseudouridine synthase TruB family. Type 2 subfamily.

The catalysed reaction is uridine(55) in tRNA = pseudouridine(55) in tRNA. In terms of biological role, could be responsible for synthesis of pseudouridine from uracil-55 in the psi GC loop of transfer RNAs. This chain is Probable tRNA pseudouridine synthase B, found in Thermococcus onnurineus (strain NA1).